The following is a 991-amino-acid chain: Regulator of telomere elongation helicase 1 homolog (991 aa).

One can recognise a Helicase ATP-binding domain in the interval N7–L319. Position 42–49 (S42–T49) interacts with ATP. [4Fe-4S] cluster-binding residues include C148, C166, C175, and C211. The DEAH box signature appears at D254 to H257. The segment at S812–G833 is disordered.

This sequence belongs to the helicase family. RAD3/XPD subfamily.

It is found in the nucleus. It carries out the reaction ATP + H2O = ADP + phosphate + H(+). Functionally, a probable ATP-dependent DNA helicase implicated in DNA repair and the maintenance of genomic stability. Acts as an anti-recombinase to counteract toxic recombination and limit crossover during meiosis. Regulates meiotic recombination and crossover homeostasis by physically dissociating strand invasion events and thereby promotes noncrossover repair by meiotic synthesis dependent strand annealing (SDSA) as well as disassembly of D loop recombination intermediates. This chain is Regulator of telomere elongation helicase 1 homolog, found in Anopheles gambiae (African malaria mosquito).